The chain runs to 241 residues: Viral CASP8 and FADD-like apoptosis regulator (241 aa).

DED domains are found at residues 8–78 (PSLP…SRFG) and 95–175 (RYRK…QLVE). Residues 212 to 241 (CMPVQESSDSPELLRTPVQESSSDSPEQTT) form a disordered region. The span at 229 to 241 (VQESSSDSPEQTT) shows a compositional bias: polar residues.

Associates with the death-inducing signaling complex (DISC) formed by TNFRSF6/FAS, FADD and CASP8. Interacts with FADD. Interacts with host TRAF2. Interacts with host NEMO/IKBKG (via N-terminus). Interacts with host SH3BP4; this interaction plays an important in the suppression of host autophagy.

The protein localises to the host cytoplasm. Its subcellular location is the host nucleus. Its function is as follows. Inhibits TNFRSF1A, TNFRSF6/FAS and TNFRSF12 induced apoptosis. Directs the degradation of host NFKBIB but not NFKBIA. Also suppresses host NF-kappa-B activation by interacting with and preventing ubiquitination of host NEMO/IKBKG, the NF-kappa-B essential modulator subunit of the IKK complex. Interferes with host CASP8/caspase-8 recruitment and activation at the death-inducing signaling complex (DISC). May lead to higher virus production and contribute to virus persistence and oncogenicity. Also participates in the inhibition of host autophagy by interacting with host SH3BP4. The protein is Viral CASP8 and FADD-like apoptosis regulator of Homo sapiens (Human).